Reading from the N-terminus, the 401-residue chain is Elongation factor Tu (401 aa).

The tr-type G domain occupies K10–K211. Residues G19 to T26 form a G1 region. Residue G19–T26 coordinates GTP. Residue T26 coordinates Mg(2+). Residues G62–A66 are G2. The segment at D83–G86 is G3. GTP is bound by residues D83–H87 and N138–D141. A G4 region spans residues N138 to D141. The G5 stretch occupies residues S179–V181.

It belongs to the TRAFAC class translation factor GTPase superfamily. Classic translation factor GTPase family. EF-Tu/EF-1A subfamily. As to quaternary structure, monomer.

Its subcellular location is the cytoplasm. It catalyses the reaction GTP + H2O = GDP + phosphate + H(+). Its function is as follows. GTP hydrolase that promotes the GTP-dependent binding of aminoacyl-tRNA to the A-site of ribosomes during protein biosynthesis. The chain is Elongation factor Tu from Leptospira borgpetersenii serovar Hardjo-bovis (strain JB197).